A 775-amino-acid polypeptide reads, in one-letter code: Ubiquitin carboxyl-terminal hydrolase 14 (775 aa).

The UBP-type 1; degenerate zinc finger occupies 1–108; sequence MSCPHLTETN…EDLYDYFYVP (108 aa). Residues Cys-25, Cys-28, Cys-41, Cys-44, Cys-49, His-56, His-60, His-66, Cys-153, His-155, Cys-174, Cys-177, Cys-186, Cys-189, Cys-194, His-207, His-211, His-217, Cys-236, and Cys-239 each contribute to the Zn(2+) site. The segment at 151–259 adopts a UBP-type 2 zinc-finger fold; sequence TTCDHIINLP…THMLNFGIDI (109 aa). The 475-residue stretch at 300–774 folds into the USP domain; that stretch reads TGLKNLGNSC…TGYVYLFERL (475 aa). Cys-309 acts as the Nucleophile in catalysis. The residue at position 456 (Ser-456) is a Phosphoserine. UBA domains lie at 576–617 and 639–679; these read EWNQ…LFEH and SVSE…ILNH. The active-site Proton acceptor is His-730.

The protein belongs to the peptidase C19 family.

The enzyme catalyses Thiol-dependent hydrolysis of ester, thioester, amide, peptide and isopeptide bonds formed by the C-terminal Gly of ubiquitin (a 76-residue protein attached to proteins as an intracellular targeting signal).. This is Ubiquitin carboxyl-terminal hydrolase 14 (ubp14) from Schizosaccharomyces pombe (strain 972 / ATCC 24843) (Fission yeast).